Reading from the N-terminus, the 187-residue chain is Large ribosomal subunit protein mL49 (187 aa).

This sequence belongs to the mitochondrion-specific ribosomal protein mL49 family.

It localises to the mitochondrion. The polypeptide is Large ribosomal subunit protein mL49 (mrpl-49) (Caenorhabditis elegans).